We begin with the raw amino-acid sequence, 542 residues long: Delta 8-(E)-sphingolipid desaturase (542 aa).

One can recognise a Cytochrome b5 heme-binding domain in the interval 1-75 (MVVSREEVRE…FKRWSIGRVK (75 aa)). The heme site is built by histidine 35 and histidine 58. 2 helical membrane-spanning segments follow: residues 215–235 (WYTL…FIAH) and 248–268 (IDNI…LGWW). The Histidine box-1 motif lies at 235–239 (HDAGH). Positions 272 to 276 (HNVHH) match the Histidine box-2 motif. 3 helical membrane passes run 329-346 (LYYP…RLSW), 360-380 (AAWF…WFFY), and 393-413 (FWFL…IVLS). The short motif at 455-459 (QAIHH) is the Histidine box-3 element.

This sequence belongs to the fatty acid desaturase type 1 family.

It is found in the membrane. The enzyme catalyses an N-acylsphing-4-enine + 2 Fe(II)-[cytochrome b5] + O2 + 2 H(+) = a (4E,8E)-4-sphinga-4,8-dienine ceramide + 2 Fe(III)-[cytochrome b5] + 2 H2O. It functions in the pathway lipid metabolism; sphingolipid metabolism. Its function is as follows. Delta(8)-fatty-acid desaturase which introduces a double bond at the 8-position in the long-chain base (LCB) of ceramides. Required for the formation of the di-unsaturated sphingoid base (E,E)-sphinga-4,8-dienine during glucosylceramide (GluCer) biosynthesis. The sequence is that of Delta 8-(E)-sphingolipid desaturase from Komagataella phaffii (strain GS115 / ATCC 20864) (Yeast).